A 328-amino-acid chain; its full sequence is L-lactate dehydrogenase (328 aa).

NAD(+)-binding positions include Val-18, Glu-39, Lys-46, Tyr-71, and 85-86 (GA). 2 residues coordinate substrate: Gln-88 and Arg-94. NAD(+)-binding positions include Ser-107, 124–126 (AAN), and Ser-149. 126 to 129 (NPVD) is a substrate binding site. 154–157 (DSAR) contacts substrate. Residues Arg-159 and His-174 each coordinate beta-D-fructose 1,6-bisphosphate. The Proton acceptor role is filled by His-181. Residue Tyr-226 is modified to Phosphotyrosine. Thr-235 lines the substrate pocket.

It belongs to the LDH/MDH superfamily. LDH family. In terms of assembly, homotetramer.

It is found in the cytoplasm. The catalysed reaction is (S)-lactate + NAD(+) = pyruvate + NADH + H(+). It participates in fermentation; pyruvate fermentation to lactate; (S)-lactate from pyruvate: step 1/1. Allosterically activated by fructose 1,6-bisphosphate (FBP). Functionally, catalyzes the conversion of lactate to pyruvate. This Streptococcus sanguinis (strain SK36) protein is L-lactate dehydrogenase.